The primary structure comprises 82 residues: U10-myrmicitoxin-Mri1c (82 aa).

An N-terminal signal peptide occupies residues 1-26; that stretch reads MRLSYVSLTLAIIFVMAIVHAPETEA. Residues 27–52 constitute a propeptide that is removed on maturation; the sequence is KAYPEADAVGEASAVGEADAVGVADP. Position 81 is an isoleucine amide (Ile81).

The protein belongs to the formicidae venom precursor-01 superfamily. As to expression, expressed by the venom gland.

The protein localises to the secreted. Functionally, induces paralysis 5 minutes after injection into blowflies (L.caesar). In most cases is not lethal 24 hours after injection, but paralysis is irreversible. May have antimicrobial properties, like most ant linear peptides. The sequence is that of U10-myrmicitoxin-Mri1c from Manica rubida (European giant red ant).